The primary structure comprises 302 residues: Sulfate adenylyltransferase subunit 2 (302 aa).

The tract at residues 280–302 (RQGRLIDSDQSASMEQKKRQGYF) is disordered.

Belongs to the PAPS reductase family. CysD subfamily. In terms of assembly, heterodimer composed of CysD, the smaller subunit, and CysN.

It catalyses the reaction sulfate + ATP + H(+) = adenosine 5'-phosphosulfate + diphosphate. The protein operates within sulfur metabolism; hydrogen sulfide biosynthesis; sulfite from sulfate: step 1/3. Its function is as follows. With CysN forms the ATP sulfurylase (ATPS) that catalyzes the adenylation of sulfate producing adenosine 5'-phosphosulfate (APS) and diphosphate, the first enzymatic step in sulfur assimilation pathway. APS synthesis involves the formation of a high-energy phosphoric-sulfuric acid anhydride bond driven by GTP hydrolysis by CysN coupled to ATP hydrolysis by CysD. In Shewanella oneidensis (strain ATCC 700550 / JCM 31522 / CIP 106686 / LMG 19005 / NCIMB 14063 / MR-1), this protein is Sulfate adenylyltransferase subunit 2.